We begin with the raw amino-acid sequence, 287 residues long: Telomere repeat-binding factor 5 (287 aa).

Residues 1–62 (MGNQKLKWTA…WRNLSVPPGT (62 aa)) enclose the HTH myb-type domain. The segment at residues 28–58 (WKNILRDPEFADQLIHRSNIDLKDKWRNLSV) is a DNA-binding region (H-T-H motif). The disordered stretch occupies residues 58 to 107 (VPPGTQSLTNKARPAKVKEEGDTPAADANDAVTIPRPIPTIPPPPGRRTL). Residues 93 to 103 (RPIPTIPPPPG) are compositionally biased toward pro residues. Residues 119 to 193 (NAPRYDGVIF…SIQNFYKIPD (75 aa)) form the H15 domain. Residues 233-259 (AACKVVEAENKIDVAKLAAEEFEKMTK) adopt a coiled-coil conformation.

It belongs to the histone H1/H5 family. SMH subfamily.

The protein resides in the nucleus. It is found in the chromosome. Functionally, binds preferentially double-stranded telomeric repeats. In Arabidopsis thaliana (Mouse-ear cress), this protein is Telomere repeat-binding factor 5.